The chain runs to 173 residues: Alpha-crystallin A chain (173 aa).

Methionine 1 is modified (N-acetylmethionine). A sHSP domain is found at 52 to 162 (LFRGFMDSGI…SHSERPIPVS (111 aa)). Residues histidine 100, glutamate 102, histidine 107, and histidine 154 each coordinate Zn(2+). Residues 146–173 (MMSGLDSSHSERPIPVSREEKPTSAPSS) are disordered. The span at 153–167 (SHSERPIPVSREEKP) shows a compositional bias: basic and acidic residues.

The protein belongs to the small heat shock protein (HSP20) family. Heteropolymer composed of three CRYAA and one CRYAB subunits. Inter-subunit bridging via zinc ions enhances stability, which is crucial as there is no protein turn over in the lens. Can also form homodimers and homotetramers (dimers of dimers) which serve as the building blocks of homooligomers. Within homooligomers, the zinc-binding motif is created from residues of 3 different molecules. His-100 and Glu-102 from one molecule are ligands of the zinc ion, and His-107 and His-154 residues from additional molecules complete the site with tetrahedral coordination geometry.

The protein resides in the cytoplasm. It localises to the nucleus. In terms of biological role, contributes to the transparency and refractive index of the lens. May act as a chaperone, preventing aggregation of various proteins under a wide range of stress conditions. The chain is Alpha-crystallin A chain (CRYAA) from Aquarana catesbeiana (American bullfrog).